The sequence spans 851 residues: Beta-galactosidase 3 (851 aa).

The first 29 residues, 1–29 (MAGASSYFSLRRLLLLLLPLVPLLGATTA), serve as a signal peptide directing secretion. Asn35 carries N-linked (GlcNAc...) asparagine glycosylation. Catalysis depends on Glu194, which acts as the Proton donor. Glu263 acts as the Nucleophile in catalysis. Asn361, Asn475, Asn528, and Asn533 each carry an N-linked (GlcNAc...) asparagine glycan. Positions 765-851 (GRDAAKVQLS…KTLAIEADCS (87 aa)) constitute an SUEL-type lectin domain.

It belongs to the glycosyl hydrolase 35 family.

The protein localises to the secreted. It is found in the extracellular space. The protein resides in the apoplast. The catalysed reaction is Hydrolysis of terminal non-reducing beta-D-galactose residues in beta-D-galactosides.. This is Beta-galactosidase 3 from Oryza sativa subsp. japonica (Rice).